A 297-amino-acid chain; its full sequence is MSRNIGVIGLGAMGFGVAQSLLRAGFNVHACDLRPEVLQRFADAGGVPCASPAELGSRCDVVLTLVVNAQQTEAVLFGANGAAAAMQPGKLVIASATVPPGFAEALGRRLAEQGLLMLDAPVSGGAARAASGEMTMMTSGPAEAYSLAEDVLAAIAGKVYRLGAAHGAGSKVKIINQLLAGVHIAAAAEAMALGLREGVDPDALYDVITHSAGNSWMFENRVPHILKGDYTPLSAVDIFVKDLGMVLDTARHSKFPLPLSAAAHQMFMMASTAGHGGEDDSAVIKIFPGIELPGKAE.

NAD(+) contacts are provided by residues 3–31 and Thr97; that span reads RNIG…VHAC. Lys173 is an active-site residue. Lys241 contributes to the NAD(+) binding site.

It belongs to the HIBADH-related family. L-threonate dehydrogenase subfamily.

The catalysed reaction is L-threonate + NAD(+) = 2-dehydro-L-erythronate + NADH + H(+). Catalyzes oxidation of L-threonate to 2-oxo-tetronate. Can use either NAD(+) or NADP(+) as cosubstrate, with a preference for NAD(+). The sequence is that of L-threonate dehydrogenase from Cupriavidus necator (strain ATCC 17699 / DSM 428 / KCTC 22496 / NCIMB 10442 / H16 / Stanier 337) (Ralstonia eutropha).